Consider the following 366-residue polypeptide: tRNA/tmRNA (uracil-C(5))-methyltransferase (366 aa).

S-adenosyl-L-methionine is bound by residues Gln-190, Tyr-218, Asn-223, Glu-239, and Asp-299. Cys-324 functions as the Nucleophile in the catalytic mechanism. Residue Glu-358 is the Proton acceptor of the active site.

It belongs to the class I-like SAM-binding methyltransferase superfamily. RNA M5U methyltransferase family. TrmA subfamily.

It catalyses the reaction uridine(54) in tRNA + S-adenosyl-L-methionine = 5-methyluridine(54) in tRNA + S-adenosyl-L-homocysteine + H(+). The enzyme catalyses uridine(341) in tmRNA + S-adenosyl-L-methionine = 5-methyluridine(341) in tmRNA + S-adenosyl-L-homocysteine + H(+). In terms of biological role, dual-specificity methyltransferase that catalyzes the formation of 5-methyluridine at position 54 (m5U54) in all tRNAs, and that of position 341 (m5U341) in tmRNA (transfer-mRNA). The protein is tRNA/tmRNA (uracil-C(5))-methyltransferase of Shigella dysenteriae serotype 1 (strain Sd197).